The following is a 213-amino-acid chain: Peptidoglycan-N-acetylglucosamine deacetylase BC_3618 (213 aa).

The NodB homology domain occupies 22–203; that stretch reads KIIAITFDDG…ELKKQGYRFV (182 aa). Asp29 (proton acceptor) is an active-site residue. Asp30, His80, and His84 together coordinate Zn(2+). Residue His175 is the Proton donor of the active site.

The protein belongs to the polysaccharide deacetylase family. The cofactor is Zn(2+).

The catalysed reaction is peptidoglycan-N-acetyl-D-glucosamine + H2O = peptidoglycan-D-glucosamine + acetate.. With respect to regulation, inhibited by CuCl(2) and ZnCl(2). Its function is as follows. Catalyzes the deacetylation of N-acetylglucosamine (GlcNAc) residues in peptidoglycan. Also acts on soluble chitin substrates and N-acetylchitooligomers. Acts on cell wall peptidoglycan from the Gram-positive bacteria B.cereus and B.subtilis and the Gram-negative bacterium H.pylori. Not active on acetylated xylan. In Bacillus cereus (strain ATCC 14579 / DSM 31 / CCUG 7414 / JCM 2152 / NBRC 15305 / NCIMB 9373 / NCTC 2599 / NRRL B-3711), this protein is Peptidoglycan-N-acetylglucosamine deacetylase BC_3618.